A 468-amino-acid chain; its full sequence is Interstitial collagenase (468 aa).

Residues 1–18 form the signal peptide; that stretch reads MPGLPLLLLLLWGVGSHG. A propeptide spans 19 to 98 (activation peptide); sequence FPAASETQEQ…PRCGVPDVAQ (80 aa). Residues 89–96 carry the Cysteine switch motif; the sequence is PRCGVPDV. Zn(2+) is bound at residue Cys91. Residue Asn119 is glycosylated (N-linked (GlcNAc...) asparagine). 2 residues coordinate Ca(2+): Asp123 and Asp157. Zn(2+) contacts are provided by His167 and Asp169. Asp174, Gly175, Glu177, and Gln179 together coordinate Ca(2+). A Zn(2+)-binding site is contributed by His182. The Ca(2+) site is built by Gly189, Gly191, and Asp193. Residue His195 participates in Zn(2+) binding. 3 residues coordinate Ca(2+): Asp197, Glu198, and Asp200. His217 lines the Zn(2+) pocket. Glu218 is a catalytic residue. Zn(2+)-binding residues include His221 and His227. Position 273 is a phosphothreonine (Thr273). Hemopexin repeat units follow at residues 274-323, 324-370, 373-421, and 422-465; these read PKVC…WPHL, PNGL…FGFP, VNHI…FPGI, and GNKV…WFNC. Cys277 and Cys465 form a disulfide bridge. 2 residues coordinate Ca(2+): Asp284 and Gln328. The residue at position 359 (Tyr359) is a Phosphotyrosine; by PKDCC. Ca(2+)-binding residues include Asp377 and Asp426.

Belongs to the peptidase M10A family. Ca(2+) is required as a cofactor. The cofactor is Zn(2+). Tyrosine phosphorylated in platelets by PKDCC/VLK.

The protein localises to the secreted. The protein resides in the extracellular space. It is found in the extracellular matrix. The enzyme catalyses Cleavage of the triple helix of collagen at about three-quarters of the length of the molecule from the N-terminus, at 775-Gly-|-Ile-776 in the alpha1(I) chain. Cleaves synthetic substrates and alpha-macroglobulins at bonds where P1' is a hydrophobic residue.. With respect to regulation, can be activated without removal of the activation peptide. Its function is as follows. Cleaves collagens of types I, II, and III at one site in the helical domain. Also cleaves collagens of types VII and X. This is Interstitial collagenase (MMP1) from Oryctolagus cuniculus (Rabbit).